We begin with the raw amino-acid sequence, 353 residues long: MKIAYVVSSKKKCGPNIVILNIVKELANKHEMEIFFLDESDDDVFECVNVKSTQIKKASDLKEHLKRFDIIHSSGIRPDALVVLCKVIYRVKCKIITTIHNYVFQDLYYSYGLVKSLIWGLLWCSIWLFFDKLVILSKNADNYYWFLPSAKKNIIYNGIDDNDCLQNKKCNYRKEFNIPDDGILAGSCANLTKCKGIDLVIQTLTKEHKIYYIVAGDGIEKHNLINLVKARKLHERVYFIDFLDEPESFMSQLDVFLMPSRSEGFGLTVLESTKLGIPVITSNIPIFMELFDQMCLTFDIKNPSTLIDVITYAKKNRLHLSQKFHAIFQDRFTSSKMATKYENVYNNLFREVL.

The helical transmembrane segment at 116-136 (SLIWGLLWCSIWLFFDKLVIL) threads the bilayer. Asparagine 190 and glutamate 271 together coordinate UDP. Residues 263–271 (EGFGLTVLE) carry the E(x7)E glycosyltransferase motif motif.

Belongs to the glycosyltransferase group 1 family. Glycosyltransferase 4 subfamily.

Its subcellular location is the membrane. It functions in the pathway bacterial outer membrane biogenesis; LPS O-antigen biosynthesis. Functionally, involved in the assembly of the O-repeating unit during O-antigen biosynthesis. N-acetylglucosamine transferase accountable for the alpha-D-GlcNAc-1,4-beta-D-Gal linkage within the O-antigen. In Escherichia coli, this protein is O-antigen biosynthesis glycosyltransferase WclY.